Consider the following 117-residue polypeptide: Large ribosomal subunit protein bL20 (117 aa).

The protein belongs to the bacterial ribosomal protein bL20 family.

Its function is as follows. Binds directly to 23S ribosomal RNA and is necessary for the in vitro assembly process of the 50S ribosomal subunit. It is not involved in the protein synthesizing functions of that subunit. The polypeptide is Large ribosomal subunit protein bL20 (Geobacter metallireducens (strain ATCC 53774 / DSM 7210 / GS-15)).